We begin with the raw amino-acid sequence, 194 residues long: MEPLKTHTGTIAVLDRVNVDTDQIIPKQFLKRVERTGFGQFLFFDWRFLPNGEDNPDFELNQPHAKQGTILVAGHNFGCGSSREHAPWAIKDYGFRVVIAPSFADIFYNNCFKNGILPVKLKQEEVTALMEKGKDTAYSLTVNLEAQTVTSEDGFEATFEIDGYWKEMLINGWDEIGLTLRYEEQIKQFEASRV.

Belongs to the LeuD family. LeuD type 1 subfamily. As to quaternary structure, heterodimer of LeuC and LeuD.

It carries out the reaction (2R,3S)-3-isopropylmalate = (2S)-2-isopropylmalate. Its pathway is amino-acid biosynthesis; L-leucine biosynthesis; L-leucine from 3-methyl-2-oxobutanoate: step 2/4. Functionally, catalyzes the isomerization between 2-isopropylmalate and 3-isopropylmalate, via the formation of 2-isopropylmaleate. This Halalkalibacterium halodurans (strain ATCC BAA-125 / DSM 18197 / FERM 7344 / JCM 9153 / C-125) (Bacillus halodurans) protein is 3-isopropylmalate dehydratase small subunit.